The chain runs to 710 residues: Choline transporter-like protein 2 (710 aa).

The Cytoplasmic portion of the chain corresponds to 1–34 (MEDDGKSPPDSAYGEPKKYDPNFKGPIQNRGCTD). The helical transmembrane segment at 35–55 (ILCCILIVLGIIAYVAVGIVA) threads the bilayer. Topologically, residues 56–236 (WTYGDPRKVI…KIFEDYTVSW (181 aa)) are extracellular. 3 N-linked (GlcNAc...) asparagine glycosylation sites follow: N147, N190, and N204. Residues 237–257 (YWIIIGLIIAMVISLIFVVLL) form a helical membrane-spanning segment. Topologically, residues 258 to 260 (RFL) are cytoplasmic. The helical transmembrane segment at 261–281 (AGIMVWVMIVLVIAVMGYGIF) threads the bilayer. Over 282–319 (HCYMEYARLKGQSGSDVTLKDIGFQTDIRVYLHLRQTW) the chain is Extracellular. A helical membrane pass occupies residues 320–340 (LAFMIILCILEVIVILLLIFL). Over 341-368 (RKRIMIAIALIKEASRAVGFVMSSLVFP) the chain is Cytoplasmic. The chain crosses the membrane as a helical span at residues 369–389 (LFTFLLVCLCIAYWAITAVFL). Residues 390–458 (STSNEAVYKV…FQIYNAFMFL (69 aa)) lie on the Extracellular side of the membrane. N401, N418, and N421 each carry an N-linked (GlcNAc...) asparagine glycan. A helical membrane pass occupies residues 459-481 (WLANFVIALGQVTLAGAFASYYW). At 482 to 508 (AFKKPDDMPAFPIFSSLGRALRYHTGS) the chain is on the cytoplasmic side. Residues 509–529 (LAFGSLILAIVQMIRILLEYL) form a helical membrane-spanning segment. Topologically, residues 530-567 (DHKLKGADNKCARFLLCCLKCCFWCLEKFIKFLNRNAY) are extracellular. Residues 568–588 (IMIAIYGTNFCTSARNAFFLL) traverse the membrane as a helical segment. Residues 589–603 (MRNIIRVAVLDKVTD) lie on the Cytoplasmic side of the membrane. The helical transmembrane segment at 604–624 (FLLFLGKLLVVGCVGILAFFF) threads the bilayer. The Extracellular portion of the chain corresponds to 625–642 (FSRRIQIVQDTAPTLNYY). The helical transmembrane segment at 643 to 663 (WVPILTVILGSYLIAHGFFSV) threads the bilayer. Topologically, residues 664 to 710 (YGMCVDTLFLCFLEDLERNDGSTERPYFMSGSLQKLLNKSNQTKPDK) are cytoplasmic.

The protein belongs to the CTL (choline transporter-like) family.

The protein localises to the cell membrane. It localises to the mitochondrion outer membrane. It carries out the reaction choline(out) + n H(+)(in) = choline(in) + n H(+)(out). The enzyme catalyses ethanolamine(out) + n H(+)(in) = ethanolamine(in) + n H(+)(out). Its function is as follows. Choline/H+ antiporter, mainly in mitochodria. Also acts as a low-affinity ethanolamine/H+ antiporter, regulating the supply of extracellular ethanolamine (Etn) for the CDP-Etn pathway, redistribute intracellular Etn and balance the CDP-Cho and CDP-Etn arms of the Kennedy pathway. In Xenopus laevis (African clawed frog), this protein is Choline transporter-like protein 2 (slc44a2).